A 111-amino-acid polypeptide reads, in one-letter code: Prostate and testis expressed protein 2 (111 aa).

The N-terminal stretch at 1–18 is a signal peptide; that stretch reads MFVLVMICLFCQYWGVLN. The region spanning 27–108 is the UPAR/Ly6 domain; sequence LLCYKCKKYH…CKHSNYCNLP (82 aa). Intrachain disulfides connect C29–C55, C32–C40, C47–C78, and C82–C99.

It belongs to the PATE family. Expressed in prostate, testis, brain and lung.

It localises to the secreted. The chain is Prostate and testis expressed protein 2 (Pate2) from Mus musculus (Mouse).